Reading from the N-terminus, the 212-residue chain is MRPDFHKQELIPVIVQDYQTNQVLMLAYTNEVAFEKMLETGETWFWSRSRQKLWHKGEESGHFQKIKGMRLDCDQDTLLVFVEQIGNACHTGTYSCFYDELIPFDDSDIFSELEKQIIDRKLHPVEKSYTNYLLGEGIDKVLKKVGEEASEVIIASKNSDKGELLGEIDDLLYHLFVLMNQQGISLEEVRQKAKERHQLEGNKKEFHTRTAD.

The tract at residues 1–109 is phosphoribosyl-AMP cyclohydrolase; that stretch reads MRPDFHKQEL…ELIPFDDSDI (109 aa). The tract at residues 110-212 is phosphoribosyl-ATP pyrophosphohydrolase; it reads FSELEKQIID…KKEFHTRTAD (103 aa).

This sequence in the N-terminal section; belongs to the PRA-CH family. In the C-terminal section; belongs to the PRA-PH family.

It localises to the cytoplasm. It carries out the reaction 1-(5-phospho-beta-D-ribosyl)-ATP + H2O = 1-(5-phospho-beta-D-ribosyl)-5'-AMP + diphosphate + H(+). It catalyses the reaction 1-(5-phospho-beta-D-ribosyl)-5'-AMP + H2O = 1-(5-phospho-beta-D-ribosyl)-5-[(5-phospho-beta-D-ribosylamino)methylideneamino]imidazole-4-carboxamide. Its pathway is amino-acid biosynthesis; L-histidine biosynthesis; L-histidine from 5-phospho-alpha-D-ribose 1-diphosphate: step 2/9. The protein operates within amino-acid biosynthesis; L-histidine biosynthesis; L-histidine from 5-phospho-alpha-D-ribose 1-diphosphate: step 3/9. The polypeptide is Histidine biosynthesis bifunctional protein HisIE (hisI) (Lactococcus lactis subsp. lactis (strain IL1403) (Streptococcus lactis)).